A 189-amino-acid chain; its full sequence is MEQIDKQKIADAVKVILEAVGENPDREGLIDTPMRVARMYEEVFAGLKKDPSVHFDTIFEEQHEELVLVKDIRFSSMCEHHLVPFFGVAHVAYLPQNGRVAGLSKLARVVDDVSRRPQLQERITTTVAEIMMEKLKPLGVMVIMEAEHMCMTIRGVNKPGTKTITSAVRGAFKNDDKLRSEVLALIKHN.

Cys-78, His-81, and Cys-150 together coordinate Zn(2+).

Belongs to the GTP cyclohydrolase I family. As to quaternary structure, toroid-shaped homodecamer, composed of two pentamers of five dimers.

It carries out the reaction GTP + H2O = 7,8-dihydroneopterin 3'-triphosphate + formate + H(+). It functions in the pathway cofactor biosynthesis; 7,8-dihydroneopterin triphosphate biosynthesis; 7,8-dihydroneopterin triphosphate from GTP: step 1/1. The polypeptide is GTP cyclohydrolase 1 (Listeria monocytogenes serovar 1/2a (strain ATCC BAA-679 / EGD-e)).